An 876-amino-acid chain; its full sequence is Valine--tRNA ligase (876 aa).

Positions 43–53 (PNVTGVLHMGH) match the 'HIGH' region motif. The short motif at 534–538 (KMSKS) is the 'KMSKS' region element. Lys-537 contacts ATP. A coiled-coil region spans residues 847 to 876 (PEKVVAIEKAKKADAEAKIEALKASLKSLS).

Belongs to the class-I aminoacyl-tRNA synthetase family. ValS type 1 subfamily. As to quaternary structure, monomer.

It is found in the cytoplasm. It carries out the reaction tRNA(Val) + L-valine + ATP = L-valyl-tRNA(Val) + AMP + diphosphate. Functionally, catalyzes the attachment of valine to tRNA(Val). As ValRS can inadvertently accommodate and process structurally similar amino acids such as threonine, to avoid such errors, it has a 'posttransfer' editing activity that hydrolyzes mischarged Thr-tRNA(Val) in a tRNA-dependent manner. This chain is Valine--tRNA ligase, found in Christiangramia forsetii (strain DSM 17595 / CGMCC 1.15422 / KT0803) (Gramella forsetii).